The primary structure comprises 837 residues: Tuftelin-interacting protein 11 (837 aa).

Positions 1–13 (MSLSHLYRDGEGH) are enriched in basic and acidic residues. 3 disordered regions span residues 1 to 31 (MSLSHLYRDGEGHMDDDEDERENFEITDWDL), 54 to 73 (WAERDSDEERPSFGGKRARD), and 85 to 136 (LKKG…AGGT). A required for interaction with DHX15 region spans residues 1–50 (MSLSHLYRDGEGHMDDDEDERENFEITDWDLQNEFNPNRQRHWQTKEEAT). Residue Ser2 is modified to Phosphoserine. Acidic residues predominate over residues 14-28 (MDDDEDERENFEITD). Over residues 54–64 (WAERDSDEERP) the composition is skewed to basic and acidic residues. 2 positions are modified to phosphoserine: Ser59 and Ser98. Positions 91 to 102 (EEAELEDSDDEE) are enriched in acidic residues. The span at 103 to 116 (KPVKQDEFPKDFGP) shows a compositional bias: basic and acidic residues. Residue Ser144 is modified to Phosphoserine. A G-patch domain is found at 149 to 195 (TKGIGQKLLQKMGYVPGRGLGKNAQGIINPIEAKQRKGKGAVGAYGS). Disordered stretches follow at residues 183–236 (QRKG…KKKP) and 287–313 (HKHSVPDDGLPPQAQPPPPPGKEARAP). A Phosphoserine modification is found at Ser210. Basic and acidic residues predominate over residues 217-231 (EFQKELSQWRKDPSG). The Nuclear localization signal signature appears at 700-705 (VKDKFN). Residues 710-734 (IMNRAVSSNVGAYMQPGAREHIAYL) form a required for nuclear speckle localization region.

It belongs to the TFP11/STIP family. In terms of assembly, identified in the spliceosome C complex. Found in the Intron Large (IL) complex, a post-mRNA release spliceosomal complex containing the excised intron, U2, U5 and U6 snRNPs, and splicing factors. Interacts with TUFT1. Interacts with DHX15; indicative for a recruitment of DHX15 to the IL complex. Interacts with GCFC2.

The protein resides in the cytoplasm. It is found in the nucleus. Involved in pre-mRNA splicing, specifically in spliceosome disassembly during late-stage splicing events. Intron turnover seems to proceed through reactions in two lariat-intron associated complexes termed Intron Large (IL) and Intron Small (IS). In cooperation with DHX15 seems to mediate the transition of the U2, U5 and U6 snRNP-containing IL complex to the snRNP-free IS complex leading to efficient debranching and turnover of excised introns. May play a role in the differentiation of ameloblasts and odontoblasts or in the forming of the enamel extracellular matrix. This Bos taurus (Bovine) protein is Tuftelin-interacting protein 11 (TFIP11).